Reading from the N-terminus, the 231-residue chain is LexA repressor (231 aa).

Positions 26 to 46 (FDEMKDALDLRSKSGIHRLIT) form a DNA-binding region, H-T-H motif. Catalysis depends on for autocatalytic cleavage activity residues serine 152 and lysine 190.

This sequence belongs to the peptidase S24 family. In terms of assembly, homodimer.

The catalysed reaction is Hydrolysis of Ala-|-Gly bond in repressor LexA.. Its function is as follows. Represses a number of genes involved in the response to DNA damage (SOS response), including recA and lexA. In the presence of single-stranded DNA, RecA interacts with LexA causing an autocatalytic cleavage which disrupts the DNA-binding part of LexA, leading to derepression of the SOS regulon and eventually DNA repair. The chain is LexA repressor from Dinoroseobacter shibae (strain DSM 16493 / NCIMB 14021 / DFL 12).